A 479-amino-acid polypeptide reads, in one-letter code: tRNA-2-methylthio-N(6)-dimethylallyladenosine synthase (479 aa).

One can recognise an MTTase N-terminal domain in the interval 6-122 (KTVYIKTVGC…IPDMLTKVTS (117 aa)). [4Fe-4S] cluster contacts are provided by Cys15, Cys51, Cys85, Cys172, Cys176, and Cys179. Residues 158–390 (RPTPFQAYLR…LAVQDRISKE (233 aa)) enclose the Radical SAM core domain. In terms of domain architecture, TRAM spans 393 to 464 (QKLIGDTVEV…SHTLIGRVKT (72 aa)).

The protein belongs to the methylthiotransferase family. MiaB subfamily. As to quaternary structure, monomer. The cofactor is [4Fe-4S] cluster.

It localises to the cytoplasm. The catalysed reaction is N(6)-dimethylallyladenosine(37) in tRNA + (sulfur carrier)-SH + AH2 + 2 S-adenosyl-L-methionine = 2-methylsulfanyl-N(6)-dimethylallyladenosine(37) in tRNA + (sulfur carrier)-H + 5'-deoxyadenosine + L-methionine + A + S-adenosyl-L-homocysteine + 2 H(+). In terms of biological role, catalyzes the methylthiolation of N6-(dimethylallyl)adenosine (i(6)A), leading to the formation of 2-methylthio-N6-(dimethylallyl)adenosine (ms(2)i(6)A) at position 37 in tRNAs that read codons beginning with uridine. This Rhodopirellula baltica (strain DSM 10527 / NCIMB 13988 / SH1) protein is tRNA-2-methylthio-N(6)-dimethylallyladenosine synthase.